Consider the following 918-residue polypeptide: Hexokinase-1 (918 aa).

N-acetylmethionine is present on Met-1. The mitochondrial-binding peptide (MBP) stretch occupies residues 1-10 (MIAAQLLAYY). 2 consecutive Hexokinase domains span residues 16-458 (DDQV…MVTA) and 464-906 (AEQH…LITA). ATP contacts are provided by residues Arg-30 and 84–89 (DLGGSS). Residues 73–207 (DGSEKGDFIA…DYDANIVAVV (135 aa)) form a hexokinase small subdomain 1 region. D-glucose 6-phosphate is bound at residue 84-88 (DLGGS). Residues Ser-155, 172 to 173 (TK), and 208 to 209 (ND) each bind D-glucose. Residues 208-447 (NDTVGTMMTC…SDVRFLLSES (240 aa)) form a hexokinase large subdomain 1 region. D-glucose 6-phosphate contacts are provided by Asp-209 and Thr-232. Residues Asn-235, Glu-260, and 291-294 (QLFE) each bind D-glucose. Phosphoserine is present on Ser-337. 413–415 (DGS) provides a ligand contact to D-glucose 6-phosphate. 425–426 (RR) serves as a coordination point for ATP. D-glucose 6-phosphate contacts are provided by residues Thr-449, 532-536 (DLGGT), and Ser-603. The segment at 521–655 (DGTEHGDFLA…EFDLDVVAVV (135 aa)) is hexokinase small subdomain 2. 532 to 537 (DLGGTN) lines the ATP pocket. D-glucose is bound by residues 620-621 (TK) and 656-657 (ND). The interval 656 to 895 (NDTVGTMMTC…CTVSFLLSED (240 aa)) is hexokinase large subdomain 2. D-glucose 6-phosphate contacts are provided by Asp-657 and Thr-680. Residue Thr-680 coordinates ATP. Residues Asn-683, Glu-708, and Glu-742 each contribute to the D-glucose site. Residues 747–748 (GM), 784–788 (TKFLS), and 863–867 (TLYKL) contribute to the ATP site. D-glucose 6-phosphate is bound by residues 861–863 (DGT) and Ser-897.

The protein belongs to the hexokinase family. As to quaternary structure, monomer. Interacts with RABL2/RABL2A; binds preferentially to GTP-bound RABL2. Interacts with VDAC1. The HK1-VDAC1 complex interacts with ATF2. Interacts (via N-terminal spermatogenic cell-specific region) with PFKM (via C-terminus). Interacts with SMAD5. As to expression, expressed in flagella of epididymal sperm.

The protein localises to the mitochondrion outer membrane. It is found in the cytoplasm. The protein resides in the cytosol. It catalyses the reaction a D-hexose + ATP = a D-hexose 6-phosphate + ADP + H(+). The catalysed reaction is D-fructose + ATP = D-fructose 6-phosphate + ADP + H(+). The enzyme catalyses D-glucose + ATP = D-glucose 6-phosphate + ADP + H(+). It carries out the reaction D-mannose + ATP = D-mannose 6-phosphate + ADP + H(+). It catalyses the reaction D-glucosamine + ATP = D-glucosamine 6-phosphate + ADP + H(+). Its pathway is carbohydrate metabolism; hexose metabolism. The protein operates within carbohydrate degradation; glycolysis; D-glyceraldehyde 3-phosphate and glycerone phosphate from D-glucose: step 1/4. Its activity is regulated as follows. Hexokinase is an allosteric enzyme inhibited by its product D-glucose 6-phosphate. Hexokinase activity is inhibited by N-acetyl-D-glucosamine. Its function is as follows. Catalyzes the phosphorylation of various hexoses, such as D-glucose, D-glucosamine, D-fructose, D-mannose and 2-deoxy-D-glucose, to hexose 6-phosphate (D-glucose 6-phosphate, D-glucosamine 6-phosphate, D-fructose 6-phosphate, D-mannose 6-phosphate and 2-deoxy-D-glucose 6-phosphate, respectively). Mediates the initial step of glycolysis by catalyzing phosphorylation of D-glucose to D-glucose 6-phosphate. Involved in innate immunity and inflammation by acting as a pattern recognition receptor for bacterial peptidoglycan. When released in the cytosol, N-acetyl-D-glucosamine component of bacterial peptidoglycan inhibits the hexokinase activity of HK1 and causes its dissociation from mitochondrial outer membrane, thereby activating the NLRP3 inflammasome. The polypeptide is Hexokinase-1 (Rattus norvegicus (Rat)).